Here is a 357-residue protein sequence, read N- to C-terminus: Isopentenyl-diphosphate delta-isomerase (357 aa).

Substrate is bound at residue 12–13; it reads RK. Residues Ser-70, 71–73, Ser-101, and Asn-130 each bind FMN; that span reads SMT. Residue 101 to 103 participates in substrate binding; sequence SMR. Gln-165 lines the substrate pocket. Glu-166 contributes to the Mg(2+) binding site. FMN-binding positions include Lys-197, 289 to 291, and 310 to 311; these read GIR and AQ.

Belongs to the IPP isomerase type 2 family. As to quaternary structure, homooctamer. Dimer of tetramers. FMN is required as a cofactor. Requires NADPH as cofactor. Mg(2+) serves as cofactor.

It localises to the cytoplasm. The enzyme catalyses isopentenyl diphosphate = dimethylallyl diphosphate. Functionally, involved in the biosynthesis of isoprenoids. Catalyzes the 1,3-allylic rearrangement of the homoallylic substrate isopentenyl (IPP) to its allylic isomer, dimethylallyl diphosphate (DMAPP). This chain is Isopentenyl-diphosphate delta-isomerase, found in Chlorobaculum parvum (strain DSM 263 / NCIMB 8327) (Chlorobium vibrioforme subsp. thiosulfatophilum).